The following is a 416-amino-acid chain: cAMP-dependent protein kinase regulatory subunit (416 aa).

Residues 2–183 form a dimerization and phosphorylation region; it reads VSSLPKESQA…RLEKSIRNNF (182 aa). Phosphoserine occurs at positions 3, 4, 9, 68, 70, 74, 77, 79, 81, 83, and 84. Residues 8–45 form a dimerization/docking domain (D/D) region; it reads ESQAELQLFQNEINAANPSDFLQFSANYFNKRLEQQRA. The segment at 65–138 is disordered; the sequence is PEESFSRPQS…TSTPPLPMHF (74 aa). Over residues 70 to 84 the composition is skewed to low complexity; sequence SRPQSAQSQSRSRSS. T129 is subject to Phosphothreonine. At S130 the chain carries Phosphoserine. Residues T131 and T144 each carry the phosphothreonine modification. An Inhibitor sequence (IS) motif is present at residues 142 to 146; sequence RRTSV. S145 carries the phosphoserine; by autocatalysis modification. At S147 the chain carries Phosphoserine. Phosphothreonine is present on residues T150 and T160. Residues 184–301, E249, R258, 302–416, E368, and R377 each bind 3',5'-cyclic AMP; these read LFNK…KSMP and VLKS…PTRH.

This sequence belongs to the cAMP-dependent kinase regulatory chain family. As to quaternary structure, the inactive holoenzyme of cAMP-dependent protein kinase is a tetramer, composed of 2 regulatory subunits (R, encoded by BCY1) and two catalytic subunits (C, encoded by the 3 partially redundant TPK1, TPK2, and TPK3 genes). Activation by cAMP causes dissociation of the holoenzyme, producing 2 active catalytic monomers C and a regulatory dimer R(2). In terms of processing, phosphorylated by YAK1 in response to glucose starvation. Phosphorylated by MCK1 at Thr-129 upon TOR complex 1 (TORC1) inhibition. Thr-129 phosphorylation activates BCY1 to inhibit PKA. TORC1 inhibits phosphorylation of RxxS/T sites but has no effect on Ser-145 phosphorylation. The phosphorylation sites can be clustered in several groups, all localized in the N-terminal part. The first cluster termed cluster I (CI) is located close to the N-terminus and includes Ser-3, Ser-4 and Ser-9. The second includes Ser-68, Ser-70, Ser-74, Ser-77, Ser-79, Ser-81, Ser-83, and Ser-84. This cluster of phosphorylation sites, termed cluster II (CII), is important for BCY1 cytoplasmic localization and function. The third cluster of phosphorylated residues consists of Thr-144, Ser-145, Ser-147, Thr-150, and Thr-160. This cluster falls within or near the so-called autoinhibitory domain where the catalytic subunit of PKA autophosphorylates the highly conserved Ser-145 to inhibit BCY1. A last cluster of phosphorylated residues included Thr-129, Ser-130, and Thr-131 and is termed cluster III (CIII). Sites in CIII (and to a lesser extent in CII) are hyperphosphorylated in response to rapamycin.

The protein resides in the cytoplasm. The protein localises to the nucleus. Regulatory subunit of the cyclic AMP-dependent protein kinase (PKA), an effector of the Ras/cAMP pathway. Inhibits PKA activity in the absence of cAMP. cAMP activates PKA and promotes growth and proliferation in response to good nutrient conditions. Together with ZDS1, provides a negative feedback control on the cell wall integrity-signaling pathway by acting as a negative regulator of MAP kinase SLT2/MPK1. The polypeptide is cAMP-dependent protein kinase regulatory subunit (BCY1) (Saccharomyces cerevisiae (strain ATCC 204508 / S288c) (Baker's yeast)).